Consider the following 868-residue polypeptide: Phospholipase D delta (868 aa).

One can recognise a C2 domain in the interval 1-154 (MAEKVSEDVM…ASGERISGWF (154 aa)). Aspartate 216 provides a ligand contact to Ca(2+). The PLD phosphodiesterase 1 domain maps to 368–403 (TLFTHHQKCVLVDTQAVGNNRKVTAFIGGLDLCDGR). Catalysis depends on residues histidine 373, lysine 375, and aspartate 380. Histidine 373 is an a 1,2-diacyl-sn-glycero-3-phosphate binding site. Ca(2+) is bound by residues histidine 409 and histidine 440. Glutamine 588 and histidine 718 together coordinate a 1,2-diacyl-sn-glycero-3-phosphate. One can recognise a PLD phosphodiesterase 2 domain in the interval 713–740 (FMIYVHAKGMIVDDEYVLMGSANINQRS). Catalysis depends on residues histidine 718, lysine 720, and aspartate 725. Glutamate 781 contributes to the Ca(2+) binding site.

This sequence belongs to the phospholipase D family. C2-PLD subfamily. As to quaternary structure, interacts with GAPC1 and GAPC2. Increased interaction in the presence of H(2)O(2). Requires Ca(2+) as cofactor. As to expression, expressed in roots, leaves, stems, siliques and flowers. Strongly expressed in the vascular tissues of cotyledons and leaves under dehydration stress conditions. Expression is higher in old leaves than in young leaves. Expressed in leaves and guard cells. The isoform 2 may not be present in siliques.

The protein resides in the cell membrane. The catalysed reaction is a 1,2-diacyl-sn-glycero-3-phosphocholine + H2O = a 1,2-diacyl-sn-glycero-3-phosphate + choline + H(+). With respect to regulation, activated by free oleic acid in a dose-dependent manner and less effectively by other unsaturated fatty acids such as linoleic and linolenic acids. Not activated by the saturated fatty acids stearic and palmitic acids. PIP2 and Ca(2+) stimulate activity by promoting lipid substrate binding to the active site. Activated by H(2)O(2) and by binding to GAPC. Functionally, hydrolyzes glycerol-phospholipids at the terminal phosphodiesteric bond to generate phosphatidic acids (PA). May be involved in PA accumulation in the dehydration stress response and in the transduction of hormonal and environmental signals to the microtubules cytoskeleton. Prefers phosphatidylethanolamine to phosphatidylcholine as substrate. Involved in H(2)O(2) and abscisic acid (ABA)-induced stomatal closure. Involved in nitric oxide (NO) signaling during stomatal closure. Plays a positive role in ABA-promoted senescence. Involved in basal defense and nonhost resistance. In Arabidopsis thaliana (Mouse-ear cress), this protein is Phospholipase D delta.